We begin with the raw amino-acid sequence, 337 residues long: Ketol-acid reductoisomerase (NADP(+)) (337 aa).

Residues 3 to 183 (VEMFYDDDAD…GGTRAGVIKT (181 aa)) form the KARI N-terminal Rossmann domain. Residues 26 to 29 (YGSQ), K49, S52, S54, and 84 to 87 (DTAQ) contribute to the NADP(+) site. H109 is an active-site residue. G135 contributes to the NADP(+) binding site. In terms of domain architecture, KARI C-terminal knotted spans 184–329 (TFKEETETDL…KKLRDLMSWV (146 aa)). Mg(2+)-binding residues include D192, E196, E228, and E232. S253 is a binding site for substrate.

It belongs to the ketol-acid reductoisomerase family. It depends on Mg(2+) as a cofactor.

It carries out the reaction (2R)-2,3-dihydroxy-3-methylbutanoate + NADP(+) = (2S)-2-acetolactate + NADPH + H(+). It catalyses the reaction (2R,3R)-2,3-dihydroxy-3-methylpentanoate + NADP(+) = (S)-2-ethyl-2-hydroxy-3-oxobutanoate + NADPH + H(+). The protein operates within amino-acid biosynthesis; L-isoleucine biosynthesis; L-isoleucine from 2-oxobutanoate: step 2/4. It functions in the pathway amino-acid biosynthesis; L-valine biosynthesis; L-valine from pyruvate: step 2/4. Its function is as follows. Involved in the biosynthesis of branched-chain amino acids (BCAA). Catalyzes an alkyl-migration followed by a ketol-acid reduction of (S)-2-acetolactate (S2AL) to yield (R)-2,3-dihydroxy-isovalerate. In the isomerase reaction, S2AL is rearranged via a Mg-dependent methyl migration to produce 3-hydroxy-3-methyl-2-ketobutyrate (HMKB). In the reductase reaction, this 2-ketoacid undergoes a metal-dependent reduction by NADPH to yield (R)-2,3-dihydroxy-isovalerate. In Rhodococcus erythropolis (strain PR4 / NBRC 100887), this protein is Ketol-acid reductoisomerase (NADP(+)).